Here is a 314-residue protein sequence, read N- to C-terminus: Putative methylthioribose-1-phosphate isomerase (314 aa).

Residues 45 to 47, Arg-79, and Gln-177 contribute to the substrate site; that span reads RGA. Catalysis depends on Asp-218, which acts as the Proton donor. 227 to 228 lines the substrate pocket; the sequence is NK.

This sequence belongs to the eIF-2B alpha/beta/delta subunits family. MtnA subfamily.

It catalyses the reaction 5-(methylsulfanyl)-alpha-D-ribose 1-phosphate = 5-(methylsulfanyl)-D-ribulose 1-phosphate. Catalyzes the interconversion of methylthioribose-1-phosphate (MTR-1-P) into methylthioribulose-1-phosphate (MTRu-1-P). This Methanosphaera stadtmanae (strain ATCC 43021 / DSM 3091 / JCM 11832 / MCB-3) protein is Putative methylthioribose-1-phosphate isomerase.